The chain runs to 210 residues: N-(5'-phosphoribosyl)anthranilate isomerase (210 aa).

It belongs to the TrpF family.

The enzyme catalyses N-(5-phospho-beta-D-ribosyl)anthranilate = 1-(2-carboxyphenylamino)-1-deoxy-D-ribulose 5-phosphate. It functions in the pathway amino-acid biosynthesis; L-tryptophan biosynthesis; L-tryptophan from chorismate: step 3/5. The polypeptide is N-(5'-phosphoribosyl)anthranilate isomerase (Crocosphaera subtropica (strain ATCC 51142 / BH68) (Cyanothece sp. (strain ATCC 51142))).